The following is a 236-amino-acid chain: MQKRELIYEGKGKKMYATDDPNLLVAEFKDDLTAFDAQKRGNEAGKGALNNKISTQLFKLLESKGIVTDLVETISDTEQVVKKCEIIPLEVVVRNIATGSLSKRLGIKEGTVLPFTLVEFYYKNDDLHDPLVTDEHCIIMGLVKSEKDLQTLRHTAREINSILFKFFAERNLKLVDFKVEFGIDKDGNIILADEISPDSCRFWDATTNEKLDKDRFRQDLGSVKVAYEEVLRRILS.

This sequence belongs to the SAICAR synthetase family.

It carries out the reaction 5-amino-1-(5-phospho-D-ribosyl)imidazole-4-carboxylate + L-aspartate + ATP = (2S)-2-[5-amino-1-(5-phospho-beta-D-ribosyl)imidazole-4-carboxamido]succinate + ADP + phosphate + 2 H(+). It participates in purine metabolism; IMP biosynthesis via de novo pathway; 5-amino-1-(5-phospho-D-ribosyl)imidazole-4-carboxamide from 5-amino-1-(5-phospho-D-ribosyl)imidazole-4-carboxylate: step 1/2. The sequence is that of Phosphoribosylaminoimidazole-succinocarboxamide synthase from Campylobacter concisus (strain 13826).